Consider the following 440-residue polypeptide: MSPLEATIDPVWLIIVKVVILFVILLAWTIFNVWFERRVLAKMQNRIGPIMNSAWAGGVFQAVGDGLKLIFKEMLTPKGADKIVFNLAPVIAGIACFASWSVIPLGGQVSMFGHTTRLQITDVPVAVLFILAVASIGIYGVVLAGWSSAGTYSLLGSLRSSAQMISYEVAMGLSLVTVFIFSGSMSTSQIVESQANHLVVGGFDTHIAGHYWLLLIPSFVIYVITMFGESNRLPFDLPECESELVSGYITEYSGFPYGMYFLAEYINMATLSAVCTTLFLGGYRAPWPLNYFGVIDSGWWGLLWFFLKTQLVIFFFVWVRAAIPRFRYDHFMDLGWKVLIPVSLGWVLLVAAWRTVINQGWGRNPVFLVVVGVILVALIVWAFMGGKTDSTADEAPDEPFDAFAGGYPVPPLPHQVQAPLAGAATATTVARRDHDENGGL.

Transmembrane regions (helical) follow at residues 11-31, 83-103, 123-143, 164-184, 207-227, 261-281, 299-319, 331-351, and 366-386; these read VWLI…WTIF, IVFN…WSVI, VPVA…GVVL, MISY…FSGS, IAGH…ITMF, FLAE…LFLG, WWGL…FVWV, FMDL…LLVA, and VFLV…FMGG.

The protein belongs to the complex I subunit 1 family. As to quaternary structure, NDH-1 is composed of 14 different subunits. Subunits NuoA, H, J, K, L, M, N constitute the membrane sector of the complex.

Its subcellular location is the cell membrane. The enzyme catalyses a quinone + NADH + 5 H(+)(in) = a quinol + NAD(+) + 4 H(+)(out). Its function is as follows. NDH-1 shuttles electrons from NADH, via FMN and iron-sulfur (Fe-S) centers, to quinones in the respiratory chain. The immediate electron acceptor for the enzyme in this species is believed to be ubiquinone. Couples the redox reaction to proton translocation (for every two electrons transferred, four hydrogen ions are translocated across the cytoplasmic membrane), and thus conserves the redox energy in a proton gradient. This subunit may bind ubiquinone. The chain is NADH-quinone oxidoreductase subunit H from Cutibacterium acnes (strain DSM 16379 / KPA171202) (Propionibacterium acnes).